The following is a 189-amino-acid chain: Dual specificity phosphatase 29 (189 aa).

Residues 33 to 182 (HVNEVWPGVY…LRELDTHLQE (150 aa)) form the Tyrosine-protein phosphatase domain. Residue 126-133 (HCVMGRSR) coordinates substrate. Cysteine 127 functions as the Phosphocysteine intermediate in the catalytic mechanism.

It belongs to the protein-tyrosine phosphatase family. Non-receptor class dual specificity subfamily.

It localises to the cytoplasm. The protein resides in the nucleus. It catalyses the reaction O-phospho-L-tyrosyl-[protein] + H2O = L-tyrosyl-[protein] + phosphate. The enzyme catalyses O-phospho-L-seryl-[protein] + H2O = L-seryl-[protein] + phosphate. The catalysed reaction is O-phospho-L-threonyl-[protein] + H2O = L-threonyl-[protein] + phosphate. In terms of biological role, dual specificity phosphatase able to dephosphorylate phosphotyrosine, phosphoserine and phosphothreonine residues within the same substrate, with a preference for phosphotyrosine as a substrate. Involved in the modulation of AMPK and MAPK1/2 signaling pathways. This is Dual specificity phosphatase 29 (dusp29) from Danio rerio (Zebrafish).